The primary structure comprises 292 residues: Ribosomal protein L11 methyltransferase (292 aa).

S-adenosyl-L-methionine contacts are provided by T136, G159, D181, and N228.

It belongs to the methyltransferase superfamily. PrmA family.

It localises to the cytoplasm. The catalysed reaction is L-lysyl-[protein] + 3 S-adenosyl-L-methionine = N(6),N(6),N(6)-trimethyl-L-lysyl-[protein] + 3 S-adenosyl-L-homocysteine + 3 H(+). Functionally, methylates ribosomal protein L11. The sequence is that of Ribosomal protein L11 methyltransferase from Rhizobium rhizogenes (strain K84 / ATCC BAA-868) (Agrobacterium radiobacter).